A 299-amino-acid chain; its full sequence is ATP phosphoribosyltransferase (299 aa).

This sequence belongs to the ATP phosphoribosyltransferase family. Long subfamily. Equilibrium between an active dimeric form, an inactive hexameric form and higher aggregates. Interconversion between the various forms is largely reversible and is influenced by the natural substrates and inhibitors of the enzyme. Mg(2+) is required as a cofactor.

The protein localises to the cytoplasm. It carries out the reaction 1-(5-phospho-beta-D-ribosyl)-ATP + diphosphate = 5-phospho-alpha-D-ribose 1-diphosphate + ATP. It participates in amino-acid biosynthesis; L-histidine biosynthesis; L-histidine from 5-phospho-alpha-D-ribose 1-diphosphate: step 1/9. With respect to regulation, feedback inhibited by histidine. In terms of biological role, catalyzes the condensation of ATP and 5-phosphoribose 1-diphosphate to form N'-(5'-phosphoribosyl)-ATP (PR-ATP). Has a crucial role in the pathway because the rate of histidine biosynthesis seems to be controlled primarily by regulation of HisG enzymatic activity. The sequence is that of ATP phosphoribosyltransferase from Salmonella agona (strain SL483).